We begin with the raw amino-acid sequence, 138 residues long: Transcription antitermination protein NusB (138 aa).

It belongs to the NusB family.

In terms of biological role, involved in transcription antitermination. Required for transcription of ribosomal RNA (rRNA) genes. Binds specifically to the boxA antiterminator sequence of the ribosomal RNA (rrn) operons. The polypeptide is Transcription antitermination protein NusB (Helicobacter pylori (strain P12)).